Consider the following 411-residue polypeptide: Actin-like protein 9 (411 aa).

Residues methionine 1–leucine 15 are compositionally biased toward basic and acidic residues. A disordered region spans residues methionine 1–proline 23.

The protein belongs to the actin family. In terms of assembly, interacts with ACTL7A.

It localises to the cytoplasmic vesicle. Its subcellular location is the secretory vesicle. The protein localises to the acrosome. It is found in the cytoplasm. The protein resides in the cytoskeleton. It localises to the perinuclear theca. Functionally, testis-specic protein that plays an important role in fusion of proacrosomal vesicles and perinuclear theca formation. The sequence is that of Actin-like protein 9 (Actl9) from Rattus norvegicus (Rat).